A 113-amino-acid polypeptide reads, in one-letter code: Transcriptional activator RamA (113 aa).

An HTH araC/xylS-type domain is found at 9–107; it reads DTIVEWIDDN…HQPPGAYRKE (99 aa). 2 consecutive DNA-binding regions (H-T-H motif) follow at residues 26–47 and 74–97; these read EDIARHAGYSKWHLQRLFLQYK and VYEICLRYGFESQQTFTRIFTRTF.

Functionally, probable transcriptional activator. This is Transcriptional activator RamA (ramA) from Enterobacter cloacae.